We begin with the raw amino-acid sequence, 100 residues long: uncharacterized protein (100 aa).

The segment at 42–84 (PGEPWRTAGGIGEGGAGGDGAAAGGEGDVHGRPAGAEDGEDGA) is disordered. The segment covering 50 to 67 (GGIGEGGAGGDGAAAGGE) has biased composition (gly residues).

This is an uncharacterized protein from Torque teno tamarin virus (isolate So-TTV2).